The sequence spans 592 residues: Aspartate--tRNA(Asp/Asn) ligase (592 aa).

An L-aspartate-binding site is contributed by Glu173. The interval 197-200 is aspartate; sequence QLFK. An L-aspartate-binding site is contributed by Arg219. Residues 219–221 and Gln228 contribute to the ATP site; that span reads RDE. An L-aspartate-binding site is contributed by His451. Glu486 lines the ATP pocket. Arg493 lines the L-aspartate pocket. Residue 538–541 coordinates ATP; it reads GLDR.

The protein belongs to the class-II aminoacyl-tRNA synthetase family. Type 1 subfamily. Homodimer.

Its subcellular location is the cytoplasm. It carries out the reaction tRNA(Asx) + L-aspartate + ATP = L-aspartyl-tRNA(Asx) + AMP + diphosphate. Aspartyl-tRNA synthetase with relaxed tRNA specificity since it is able to aspartylate not only its cognate tRNA(Asp) but also tRNA(Asn). Reaction proceeds in two steps: L-aspartate is first activated by ATP to form Asp-AMP and then transferred to the acceptor end of tRNA(Asp/Asn). The sequence is that of Aspartate--tRNA(Asp/Asn) ligase from Alkalilimnicola ehrlichii (strain ATCC BAA-1101 / DSM 17681 / MLHE-1).